A 420-amino-acid chain; its full sequence is MSSETVSYFSHPFPRRQSVGVSVGGVIVGGSAPVVVQSMTNTDTADVDSTVAQVAALHRAGSEIVRITVDRDESAAAVPKIRERLERLGHDVPLVGDFHYIGHKLLADHPACAEALAKYRINPGNVGFKDKKDKQFADIVEMAIRYDKPVRIGVNWGSLDQELLTTLMDRNQAEGAPLSAQDVMREAIVQSALISANLAEEIGLGRDKIILSAKVSQVQDLIAVYTMLAQRSNHALHLGLTEAGMGTKGIVASSAAMGILLQQGIGDTIRISLTPEPGGDRTREVQVAQELLQTMGFRQFVPIVAACPGCGRTTSTVFQELAQTIQEDIRRNMPLWREKYPGVEALSVAVMGCIVNGPGESKHADIGISLPGTGETPSAPVFVDGKKVTTLRGPGIAEDFQKMVADYIENRFGLGRKIAS.

[4Fe-4S] cluster-binding residues include C307, C310, C353, and E360.

It belongs to the IspG family. Requires [4Fe-4S] cluster as cofactor.

The catalysed reaction is (2E)-4-hydroxy-3-methylbut-2-enyl diphosphate + oxidized [flavodoxin] + H2O + 2 H(+) = 2-C-methyl-D-erythritol 2,4-cyclic diphosphate + reduced [flavodoxin]. The protein operates within isoprenoid biosynthesis; isopentenyl diphosphate biosynthesis via DXP pathway; isopentenyl diphosphate from 1-deoxy-D-xylulose 5-phosphate: step 5/6. Converts 2C-methyl-D-erythritol 2,4-cyclodiphosphate (ME-2,4cPP) into 1-hydroxy-2-methyl-2-(E)-butenyl 4-diphosphate. The polypeptide is 4-hydroxy-3-methylbut-2-en-1-yl diphosphate synthase (flavodoxin) (Brucella melitensis biotype 2 (strain ATCC 23457)).